A 287-amino-acid polypeptide reads, in one-letter code: Pentatricopeptide repeat-containing protein At4g18975, chloroplastic (287 aa).

The N-terminal 34 residues, 1-34 (MALCNLNPTQGIFPLQGLSKSQEFICFSLLQSPR), are a transit peptide targeting the chloroplast. 2 PPR repeats span residues 165–199 (TMGT…HTRS) and 201–235 (PRRL…KVSP).

Belongs to the PPR family. P subfamily.

It localises to the plastid. The protein localises to the chloroplast. The sequence is that of Pentatricopeptide repeat-containing protein At4g18975, chloroplastic from Arabidopsis thaliana (Mouse-ear cress).